The sequence spans 218 residues: Ribose-5-phosphate isomerase A (218 aa).

Substrate contacts are provided by residues 28 to 31, 81 to 84, and 94 to 97; these read TGST, DGAD, and KGGG. Glu-103 serves as the catalytic Proton acceptor. Lys-121 is a binding site for substrate.

This sequence belongs to the ribose 5-phosphate isomerase family. In terms of assembly, homodimer.

It carries out the reaction aldehydo-D-ribose 5-phosphate = D-ribulose 5-phosphate. The protein operates within carbohydrate degradation; pentose phosphate pathway; D-ribose 5-phosphate from D-ribulose 5-phosphate (non-oxidative stage): step 1/1. Functionally, catalyzes the reversible conversion of ribose-5-phosphate to ribulose 5-phosphate. This is Ribose-5-phosphate isomerase A from Colwellia psychrerythraea (strain 34H / ATCC BAA-681) (Vibrio psychroerythus).